A 283-amino-acid polypeptide reads, in one-letter code: UPF0273 protein STK_18300 (283 aa).

Residues 4 to 249 (LRVRTYIPGF…YLRITNVKAE (246 aa)) form the KaiC domain. An ATP-binding site is contributed by 31–38 (GGPGTGKS). Positions 261–283 (MKKAVEESEEEKESIQEAEIEEE) are disordered. Acidic residues predominate over residues 267–283 (ESEEEKESIQEAEIEEE).

Belongs to the UPF0273 family.

The protein is UPF0273 protein STK_18300 of Sulfurisphaera tokodaii (strain DSM 16993 / JCM 10545 / NBRC 100140 / 7) (Sulfolobus tokodaii).